We begin with the raw amino-acid sequence, 198 residues long: Na(+)-translocating NADH-quinone reductase subunit E (198 aa).

Transmembrane regions (helical) follow at residues S11 to V31, G40 to F60, F77 to F97, G110 to V130, V140 to I160, and L176 to I196.

It belongs to the NqrDE/RnfAE family. As to quaternary structure, composed of six subunits; NqrA, NqrB, NqrC, NqrD, NqrE and NqrF.

The protein localises to the cell inner membrane. It catalyses the reaction a ubiquinone + n Na(+)(in) + NADH + H(+) = a ubiquinol + n Na(+)(out) + NAD(+). Functionally, NQR complex catalyzes the reduction of ubiquinone-1 to ubiquinol by two successive reactions, coupled with the transport of Na(+) ions from the cytoplasm to the periplasm. NqrA to NqrE are probably involved in the second step, the conversion of ubisemiquinone to ubiquinol. The protein is Na(+)-translocating NADH-quinone reductase subunit E of Tolumonas auensis (strain DSM 9187 / NBRC 110442 / TA 4).